Reading from the N-terminus, the 401-residue chain is Protein nanos (401 aa).

The tract at residues 181–207 (LGRMSYGSAPPQVQMPPQQQHQQQQGL) is disordered. The segment covering 190 to 205 (PPQVQMPPQQQHQQQQ) has biased composition (low complexity). The Nanos-type zinc-finger motif lies at 318 to 372 (HCVFCENNNEPEAVINSHSVRDNFNRVLCPKLRTYVCPICGASGDSAHTIKYCPK). 8 residues coordinate Zn(2+): Cys319, Cys322, His335, Cys346, Cys354, Cys357, His365, and Cys370. 2 consecutive short sequence motifs (C2HC) follow at residues 319 to 346 (CVFC…RVLC) and 354 to 370 (CPIC…IKYC).

This sequence belongs to the nanos family. In terms of assembly, interacts with pum and brat. Interacts with cup. Interacts with mei-P26; possibly involved in regulation of brat levels. Interacts with wh; may be involved in mei-P26-dependent derepression of the BMP signaling pathway. Acts via the formation of a quaternary complex composed of pum, nanos, brat and the 3'-UTR mRNA of hb. Binds RNA with no specificity. Posterior part of the embryo. While the transcript is present throughout the embryo, nanos translation is controlled by smg, and the protein is found in pole plasm and pole cells. In the female ovary expressed in germline stem cells, precystoblasts and in maturing cystoblasts; in early cystoblasts expression is post-transcriptionally repressed by bam in a 3'UTR-dependent manner.

The protein resides in the cytoplasm. Its subcellular location is the cytoplasmic ribonucleoprotein granule. Functionally, maternal RNA-binding protein that is required for germ cells proliferation and self-renewal. Acts by forming a complex with pum and brat that regulates translation and mRNA stability. The complex binds to the Nanos Response Element (NRE), a 16 bp sequence in the hb mRNA 3'-UTR and prevents its translation. Controls posterior development. Rescuing factor for the abdominal defect of posterior group mutants. The other posterior group genes are not required for nanos function but rather play a role in localization or distribution of nanos protein. In Drosophila melanogaster (Fruit fly), this protein is Protein nanos.